A 295-amino-acid chain; its full sequence is UDP-N-acetylenolpyruvoylglucosamine reductase (295 aa).

Positions 23–188 (KVGGPADFLA…ISAKFALKPG (166 aa)) constitute an FAD-binding PCMH-type domain. The active site involves Arg-167. Residue Ser-217 is the Proton donor of the active site. Glu-287 is a catalytic residue.

Belongs to the MurB family. FAD serves as cofactor.

It is found in the cytoplasm. The catalysed reaction is UDP-N-acetyl-alpha-D-muramate + NADP(+) = UDP-N-acetyl-3-O-(1-carboxyvinyl)-alpha-D-glucosamine + NADPH + H(+). It participates in cell wall biogenesis; peptidoglycan biosynthesis. Cell wall formation. This Streptococcus pyogenes serotype M3 (strain ATCC BAA-595 / MGAS315) protein is UDP-N-acetylenolpyruvoylglucosamine reductase.